Reading from the N-terminus, the 188-residue chain is MATHSTNEFRGGLKVMVDGDPCSIIDNEFVKPGKGQAFNRVKFRNLKTGRVLERTFKSGETLPAADVVEVEMQYLYNDGEFWHFMTSENYEQHAASKEAVAEAKQWLKEEALCMVTMWNGVPLSVEPPNFVELKITETEPGVRGDTATGGTKRAKLETGAVVRVPLFLNEGEIIKVDTRRGEYVSRAK.

Lys-34 bears the N6-(3,6-diaminohexanoyl)-5-hydroxylysine mark.

This sequence belongs to the elongation factor P family. Post-translationally, may be beta-lysylated on the epsilon-amino group of Lys-34 by the combined action of EpmA and EpmB, and then hydroxylated on the C5 position of the same residue by EpmC (if this protein is present). Lysylation is critical for the stimulatory effect of EF-P on peptide-bond formation. The lysylation moiety may extend toward the peptidyltransferase center and stabilize the terminal 3-CCA end of the tRNA. Hydroxylation of the C5 position on Lys-34 may allow additional potential stabilizing hydrogen-bond interactions with the P-tRNA.

Its subcellular location is the cytoplasm. It functions in the pathway protein biosynthesis; polypeptide chain elongation. Involved in peptide bond synthesis. Alleviates ribosome stalling that occurs when 3 or more consecutive Pro residues or the sequence PPG is present in a protein, possibly by augmenting the peptidyl transferase activity of the ribosome. Modification of Lys-34 is required for alleviation. The polypeptide is Elongation factor P (Coxiella burnetii (strain CbuG_Q212) (Coxiella burnetii (strain Q212))).